The chain runs to 89 residues: MAHKKGVGSSKNGRESHSKRLGVKIFGGEACKAGNIIIRQRGTEFHPGENIGMGKDHTLFALVDGTVKFKVGREDRRYVSIIPAEATEA.

The protein belongs to the bacterial ribosomal protein bL27 family.

This is Large ribosomal subunit protein bL27 from Bacteroides thetaiotaomicron (strain ATCC 29148 / DSM 2079 / JCM 5827 / CCUG 10774 / NCTC 10582 / VPI-5482 / E50).